The primary structure comprises 48 residues: ATP synthase protein 8 (48 aa).

Residues 13–32 (LVYGFALVTILLVLFAQYFL) traverse the membrane as a helical segment.

This sequence belongs to the ATPase protein 8 family. In terms of assembly, F-type ATPases have 2 components, CF(1) - the catalytic core - and CF(0) - the membrane proton channel.

It localises to the mitochondrion membrane. Its function is as follows. Mitochondrial membrane ATP synthase (F(1)F(0) ATP synthase or Complex V) produces ATP from ADP in the presence of a proton gradient across the membrane which is generated by electron transport complexes of the respiratory chain. F-type ATPases consist of two structural domains, F(1) - containing the extramembraneous catalytic core and F(0) - containing the membrane proton channel, linked together by a central stalk and a peripheral stalk. During catalysis, ATP synthesis in the catalytic domain of F(1) is coupled via a rotary mechanism of the central stalk subunits to proton translocation. Part of the complex F(0) domain. Minor subunit located with subunit a in the membrane. The sequence is that of ATP synthase protein 8 (ATP8) from Kluyveromyces lactis (strain ATCC 8585 / CBS 2359 / DSM 70799 / NBRC 1267 / NRRL Y-1140 / WM37) (Yeast).